The following is a 1819-amino-acid chain: U3 small nucleolar RNA-associated protein 10 (1819 aa).

The stretch at 1779-1817 is one HEAT repeat; sequence LIPYIAELLEDDDEDVELEVRKGLVKVLENVLGEPLDRY.

This sequence belongs to the HEATR1/UTP10 family. Component of the ribosomal small subunit (SSU) processome.

The protein resides in the nucleus. It is found in the nucleolus. Functionally, involved in nucleolar processing of pre-18S ribosomal RNA. Involved in ribosome biosynthesis. The polypeptide is U3 small nucleolar RNA-associated protein 10 (Meyerozyma guilliermondii (strain ATCC 6260 / CBS 566 / DSM 6381 / JCM 1539 / NBRC 10279 / NRRL Y-324) (Yeast)).